We begin with the raw amino-acid sequence, 116 residues long: Large ribosomal subunit protein uL18 (116 aa).

Belongs to the universal ribosomal protein uL18 family. Part of the 50S ribosomal subunit; part of the 5S rRNA/L5/L18/L25 subcomplex. Contacts the 5S and 23S rRNAs.

In terms of biological role, this is one of the proteins that bind and probably mediate the attachment of the 5S RNA into the large ribosomal subunit, where it forms part of the central protuberance. In Novosphingobium aromaticivorans (strain ATCC 700278 / DSM 12444 / CCUG 56034 / CIP 105152 / NBRC 16084 / F199), this protein is Large ribosomal subunit protein uL18.